A 309-amino-acid polypeptide reads, in one-letter code: MIIVTGGAGMIGSNIIKALNDTGYRDILVVDNLKDGTKFANLVDLDIADYIDKEDFIANIIAGDDLGEIDAIFHEGACSSTTEWDGKYMMDNNYQYSKDLLHYCLDREIPFLYASSAATYGGREEFIEERQFEAPLNVYGYSKFLFDQYVREILPEAESQICGFRYFNVYGPREGHKGSMASVAFHLNGQINRGENPKLFDGSQDFKRDFIYVGDVAAVNLWFLKSGVSGIFNCGTGRAETFQAVADAVVDFHQKGAVENIPFPEKLKGRYQAFTQADLTKLRAAGYDAPFKTVAEGVKEYMAWLNRTA.

NADP(+) contacts are provided by residues 10–11 (MI), 31–32 (DN), Lys-38, Lys-53, 75–79 (EGACS), and Asn-92. Tyr-139 serves as the catalytic Proton acceptor. Lys-143 lines the NADP(+) pocket. Residue Asn-168 coordinates substrate. Residues Val-169 and Lys-177 each contribute to the NADP(+) site. Lys-177 (proton acceptor) is an active-site residue. Residues Ser-179, His-186, 200–203 (FDGS), Arg-208, and Tyr-271 each bind substrate.

Belongs to the NAD(P)-dependent epimerase/dehydratase family. HldD subfamily. In terms of assembly, homopentamer. It depends on NADP(+) as a cofactor.

It catalyses the reaction ADP-D-glycero-beta-D-manno-heptose = ADP-L-glycero-beta-D-manno-heptose. Its pathway is nucleotide-sugar biosynthesis; ADP-L-glycero-beta-D-manno-heptose biosynthesis; ADP-L-glycero-beta-D-manno-heptose from D-glycero-beta-D-manno-heptose 7-phosphate: step 4/4. Its function is as follows. Catalyzes the interconversion between ADP-D-glycero-beta-D-manno-heptose and ADP-L-glycero-beta-D-manno-heptose via an epimerization at carbon 6 of the heptose. The sequence is that of ADP-L-glycero-D-manno-heptose-6-epimerase from Serratia proteamaculans (strain 568).